The sequence spans 29 residues: Serum amyloid P-component (29 aa).

Residues 6–29 (LGKVFVFSKESNVDDVKLLTPQTE) form the Pentraxin (PTX) domain.

Belongs to the pentraxin family. As to quaternary structure, homopentamer. Pentraxin (or pentaxin) have a discoid arrangement of 5 non-covalently bound subunits. Ca(2+) serves as cofactor.

The protein resides in the secreted. This chain is Serum amyloid P-component, found in Hippoglossus hippoglossus (Atlantic halibut).